We begin with the raw amino-acid sequence, 427 residues long: 3-phosphoshikimate 1-carboxyvinyltransferase (427 aa).

Positions 20, 21, and 25 each coordinate 3-phosphoshikimate. Position 20 (Lys-20) interacts with phosphoenolpyruvate. Residues Gly-92 and Arg-120 each contribute to the phosphoenolpyruvate site. The 3-phosphoshikimate site is built by Ser-166, Gln-168, Asp-312, and Lys-339. Residue Gln-168 coordinates phosphoenolpyruvate. Asp-312 serves as the catalytic Proton acceptor. Phosphoenolpyruvate is bound by residues Arg-343 and Arg-385.

It belongs to the EPSP synthase family. Monomer.

It localises to the cytoplasm. The enzyme catalyses 3-phosphoshikimate + phosphoenolpyruvate = 5-O-(1-carboxyvinyl)-3-phosphoshikimate + phosphate. The protein operates within metabolic intermediate biosynthesis; chorismate biosynthesis; chorismate from D-erythrose 4-phosphate and phosphoenolpyruvate: step 6/7. In terms of biological role, catalyzes the transfer of the enolpyruvyl moiety of phosphoenolpyruvate (PEP) to the 5-hydroxyl of shikimate-3-phosphate (S3P) to produce enolpyruvyl shikimate-3-phosphate and inorganic phosphate. This Streptococcus gordonii (strain Challis / ATCC 35105 / BCRC 15272 / CH1 / DL1 / V288) protein is 3-phosphoshikimate 1-carboxyvinyltransferase.